The chain runs to 392 residues: Phospho-N-acetylmuramoyl-pentapeptide-transferase (392 aa).

Transmembrane regions (helical) follow at residues 24–44 (YLTL…LIAG), 76–96 (TMGG…WFDL), 100–120 (FVWI…VDDW), 137–157 (YFWQ…SISE), 167–187 (FITW…GLLV), 193–213 (VSYP…IVGS), 225–245 (GLAI…AYVT), 262–282 (SGEL…FLWF), 289–309 (VFMG…IAVI), 314–334 (IVLA…MLQV), and 369–389 (QVVV…LTTL).

This sequence belongs to the glycosyltransferase 4 family. MraY subfamily. Mg(2+) serves as cofactor.

The protein localises to the cell inner membrane. The catalysed reaction is UDP-N-acetyl-alpha-D-muramoyl-L-alanyl-gamma-D-glutamyl-meso-2,6-diaminopimeloyl-D-alanyl-D-alanine + di-trans,octa-cis-undecaprenyl phosphate = di-trans,octa-cis-undecaprenyl diphospho-N-acetyl-alpha-D-muramoyl-L-alanyl-D-glutamyl-meso-2,6-diaminopimeloyl-D-alanyl-D-alanine + UMP. It participates in cell wall biogenesis; peptidoglycan biosynthesis. Functionally, catalyzes the initial step of the lipid cycle reactions in the biosynthesis of the cell wall peptidoglycan: transfers peptidoglycan precursor phospho-MurNAc-pentapeptide from UDP-MurNAc-pentapeptide onto the lipid carrier undecaprenyl phosphate, yielding undecaprenyl-pyrophosphoryl-MurNAc-pentapeptide, known as lipid I. The polypeptide is Phospho-N-acetylmuramoyl-pentapeptide-transferase (Acidovorax ebreus (strain TPSY) (Diaphorobacter sp. (strain TPSY))).